Reading from the N-terminus, the 97-residue chain is Large ribosomal subunit protein bL28 (97 aa).

The protein belongs to the bacterial ribosomal protein bL28 family.

The protein is Large ribosomal subunit protein bL28 of Rickettsia felis (strain ATCC VR-1525 / URRWXCal2) (Rickettsia azadi).